The following is a 242-amino-acid chain: Aliphatic sulfonates import ATP-binding protein SsuB 1 (242 aa).

The 217-residue stretch at 11 to 227 folds into the ABC transporter domain; sequence VAVRRLSRAF…RPSHPDFEDL (217 aa). Residue 43 to 50 participates in ATP binding; sequence GESGSGKT.

The protein belongs to the ABC transporter superfamily. Aliphatic sulfonates importer (TC 3.A.1.17.2) family. As to quaternary structure, the complex is composed of two ATP-binding proteins (SsuB), two transmembrane proteins (SsuC) and a solute-binding protein (SsuA).

The protein resides in the cell inner membrane. The enzyme catalyses ATP + H2O + aliphatic sulfonate-[sulfonate-binding protein]Side 1 = ADP + phosphate + aliphatic sulfonateSide 2 + [sulfonate-binding protein]Side 1.. Its function is as follows. Part of the ABC transporter complex SsuABC involved in aliphatic sulfonates import. Responsible for energy coupling to the transport system. This chain is Aliphatic sulfonates import ATP-binding protein SsuB 1, found in Paracoccus denitrificans (strain Pd 1222).